The following is a 362-amino-acid chain: Protein RecA (362 aa).

77–84 (GPESSGKT) provides a ligand contact to ATP.

The protein belongs to the RecA family.

The protein localises to the cytoplasm. Can catalyze the hydrolysis of ATP in the presence of single-stranded DNA, the ATP-dependent uptake of single-stranded DNA by duplex DNA, and the ATP-dependent hybridization of homologous single-stranded DNAs. It interacts with LexA causing its activation and leading to its autocatalytic cleavage. This is Protein RecA from Rhizobium etli (strain CIAT 652).